The primary structure comprises 182 residues: Putative manganese efflux pump MntP 2 (182 aa).

The next 6 membrane-spanning stretches (helical) occupy residues 2 to 22 (IELT…SIAL), 37 to 57 (AGGF…YLGV), 63 to 83 (IGGI…LKMI), 104 to 123 (LLLL…LTLT), 127 to 149 (LPLW…GGVH), and 162 to 182 (AEYL…IEHS).

The protein belongs to the MntP (TC 9.B.29) family.

It is found in the cell inner membrane. Its function is as follows. Probably functions as a manganese efflux pump. This chain is Putative manganese efflux pump MntP 2, found in Wolinella succinogenes (strain ATCC 29543 / DSM 1740 / CCUG 13145 / JCM 31913 / LMG 7466 / NCTC 11488 / FDC 602W) (Vibrio succinogenes).